A 618-amino-acid chain; its full sequence is DNA mismatch repair protein MutL (618 aa).

A compositionally biased stretch (low complexity) spans 366 to 378 (AEPTAAREPATPR). The disordered stretch occupies residues 366–403 (AEPTAAREPATPRYSDGASGGNGGRQSAGGWPHAQPGY). The segment covering 383 to 392 (ASGGNGGRQS) has biased composition (gly residues).

The protein belongs to the DNA mismatch repair MutL/HexB family.

Its function is as follows. This protein is involved in the repair of mismatches in DNA. It is required for dam-dependent methyl-directed DNA mismatch repair. May act as a 'molecular matchmaker', a protein that promotes the formation of a stable complex between two or more DNA-binding proteins in an ATP-dependent manner without itself being part of a final effector complex. The sequence is that of DNA mismatch repair protein MutL from Salmonella typhi.